Reading from the N-terminus, the 360-residue chain is D-alanine--D-alanine ligase (360 aa).

One can recognise an ATP-grasp domain in the interval 146–352; it reads KLCVADAGIA…YRNLITRLLE (207 aa). 179 to 234 serves as a coordination point for ATP; the sequence is EAQVSYPLFVKPASLGSSIGISKVHNREELHPALQAACALDWKVVVESTVKGREIE. Residues Asp-305, Glu-319, and Asn-321 each coordinate Mg(2+).

The protein belongs to the D-alanine--D-alanine ligase family. It depends on Mg(2+) as a cofactor. Requires Mn(2+) as cofactor.

The protein resides in the cytoplasm. It catalyses the reaction 2 D-alanine + ATP = D-alanyl-D-alanine + ADP + phosphate + H(+). The protein operates within cell wall biogenesis; peptidoglycan biosynthesis. Functionally, cell wall formation. This is D-alanine--D-alanine ligase from Chlorobium chlorochromatii (strain CaD3).